The chain runs to 185 residues: MELVVTSRETDKKSLLKKIRQTGGIPAVIYSGGKSLANIVVDAHVFSKFLSSLESGALSSTIFSLSYEGRTIKALVKDIQYHVTSYRVIHLDFEELIEDRDVKLKIPIRCINAVDCVGVKLGGSLRQVIRALRVVCKPKDIVPYLELDVRSLGLSQTRKLSDIQIPAGLRPITPLKEVAVTVSRR.

Belongs to the bacterial ribosomal protein bL25 family. CTC subfamily. Part of the 50S ribosomal subunit; part of the 5S rRNA/L5/L18/L25 subcomplex. Contacts the 5S rRNA. Binds to the 5S rRNA independently of L5 and L18.

Functionally, this is one of the proteins that binds to the 5S RNA in the ribosome where it forms part of the central protuberance. This chain is Large ribosomal subunit protein bL25, found in Chlamydia abortus (strain DSM 27085 / S26/3) (Chlamydophila abortus).